We begin with the raw amino-acid sequence, 369 residues long: Cobalt-precorrin-5B C(1)-methyltransferase (369 aa).

The protein belongs to the CbiD family.

It catalyses the reaction Co-precorrin-5B + S-adenosyl-L-methionine = Co-precorrin-6A + S-adenosyl-L-homocysteine. The protein operates within cofactor biosynthesis; adenosylcobalamin biosynthesis; cob(II)yrinate a,c-diamide from sirohydrochlorin (anaerobic route): step 6/10. Functionally, catalyzes the methylation of C-1 in cobalt-precorrin-5B to form cobalt-precorrin-6A. In Brucella melitensis biotype 2 (strain ATCC 23457), this protein is Cobalt-precorrin-5B C(1)-methyltransferase.